A 240-amino-acid chain; its full sequence is MKTNKLINKSFRFKQFSIEEGTCGMPISTDGVLLGSWAFSLSPTTILDIGCGTGLLSLMCAQRFPHAHITALDIEQTAYLAAEHNRQQSPWAERIECQHADILHWQPSKRFAAIICNPPYFNSGETAQHQVRATARHTISLQHQALIERLPQLLEPDGVASFILPKAEGEDFIALARQAGLFVGRYCQVQPTTDKPVHRLLFELHLSPCLPVETRLVIREQQGYSEAFCQLTRDFYLKMS.

The protein belongs to the methyltransferase superfamily. tRNA (adenine-N(6)-)-methyltransferase family.

The protein localises to the cytoplasm. It carries out the reaction adenosine(37) in tRNA1(Val) + S-adenosyl-L-methionine = N(6)-methyladenosine(37) in tRNA1(Val) + S-adenosyl-L-homocysteine + H(+). Specifically methylates the adenine in position 37 of tRNA(1)(Val) (anticodon cmo5UAC). In Vibrio cholerae serotype O1 (strain ATCC 39315 / El Tor Inaba N16961), this protein is tRNA1(Val) (adenine(37)-N6)-methyltransferase.